A 130-amino-acid chain; its full sequence is Small ribosomal subunit protein uS8 (130 aa).

It belongs to the universal ribosomal protein uS8 family. Part of the 30S ribosomal subunit. Contacts proteins S5 and S12.

In terms of biological role, one of the primary rRNA binding proteins, it binds directly to 16S rRNA central domain where it helps coordinate assembly of the platform of the 30S subunit. In Shewanella denitrificans (strain OS217 / ATCC BAA-1090 / DSM 15013), this protein is Small ribosomal subunit protein uS8.